A 452-amino-acid polypeptide reads, in one-letter code: Imaginal disk growth factor 6 (452 aa).

The N-terminal stretch at 1 to 18 (MIIKALAIVSLCLASIQA) is a signal peptide. The region spanning 29 to 452 (KHLVCYYDSA…LRAIKYRLTN (424 aa)) is the GH18 domain. C33 and C60 form a disulfide bridge. N-linked (GlcNAc...) asparagine glycosylation is present at N233. Residues C352 and C435 are joined by a disulfide bond.

Belongs to the glycosyl hydrolase 18 family. IDGF subfamily. Glycosylated. As to expression, in larvae, it is expressed in the fat body and by hemocytes.

It is found in the secreted. Functionally, probably required to stimulate the proliferation, polarization and motility of imaginal disk cells. May act by stabilizing the binding of insulin-like peptides to its receptor through a simultaneous interaction with both molecules to form a multiprotein signaling complex. The sequence is that of Imaginal disk growth factor 6 from Drosophila melanogaster (Fruit fly).